We begin with the raw amino-acid sequence, 648 residues long: MTALLELCNVSRSYPSGEEQVAVLKDISLQIHAGEMVAIVGVSGSGKSTLMNILGCLDKPTSGTYRVAGRDVSTLDPDALAQLRREHFGFIFQRYHLLSHLTAAQNVEIPAVYAGIERKKRQARARELLLRLGLSDRVDYPPSQLSGGQQQRVSIARALMNGGQVILADEPTGALDSHSGEEVMAILRQLRDRGHTVIIVTHDPLIAAQAERIIEIHDGKIVHNPPAQEKKREQGVDAAVVNTAPGWRQFASSFREALSMAWLAMAANKMRTLLTMLGIIIGIASVVSIVVVGDAAKQMVLADIRAMGTNTIDIHPGKDFGDDNPQYRQALKYDDLVAIQKQPWVNSATPSVSKSLRLRYGNIDIAVNANGVSGDYFNVYGMSFREGNTFNAVQQQDRAQVVVLDANTRRQLFPNKANVVGEVVLVGNMPVIVIGVAEEKPSMYGNSNLLQVWLPYSTMSDRIMGQSWLNSITVRVKDGVDSDQAEQQLTRLLTLRHGKKDFFTWNMDSVLKTAEKTTYTLQLFLTLVAVISLVVGGIGVMNIMLVSVTERTREIGIRMAVGARASDVLQQFLIEAMLVCLVGGALGISLSMFIAFMLQLFLPGWEIGFSLTALASAFLCSTFTGILFGWLPARNAARLDPVDALARE.

The ABC transporter domain maps to 5–243 (LELCNVSRSY…QGVDAAVVNT (239 aa)). 41–48 (GVSGSGKS) lines the ATP pocket. 5 helical membrane passes run 273 to 293 (LLTM…VVVG), 417 to 437 (ANVV…IGVA), 523 to 543 (LFLT…VMNI), 578 to 598 (LVCL…AFML), and 611 to 631 (LTAL…FGWL).

Belongs to the ABC transporter superfamily. Macrolide exporter (TC 3.A.1.122) family. Homodimer. Part of the tripartite efflux system MacAB-TolC, which is composed of an inner membrane transporter, MacB, a periplasmic membrane fusion protein, MacA, and an outer membrane component, TolC. The complex forms a large protein conduit and can translocate molecules across both the inner and outer membranes. Interacts with MacA.

It is found in the cell inner membrane. In terms of biological role, part of the tripartite efflux system MacAB-TolC. MacB is a non-canonical ABC transporter that contains transmembrane domains (TMD), which form a pore in the inner membrane, and an ATP-binding domain (NBD), which is responsible for energy generation. Confers resistance against macrolides. In Salmonella paratyphi A (strain ATCC 9150 / SARB42), this protein is Macrolide export ATP-binding/permease protein MacB.